Consider the following 660-residue polypeptide: Dual specificity mitogen-activated protein kinase kinase 1 (660 aa).

The span at 1–57 (MNTNTNTNTNISSSGNNIINTPTTNNNNKNNNNNNNNNNNSNNSNNNSSNNNNNNNN) shows a compositional bias: low complexity. Disordered stretches follow at residues 1 to 60 (MNTN…NAVG), 105 to 169 (KGES…FNNL), and 204 to 229 (NNNYNNYNNNNNSNNNNNNYNNSNNN). Lys105 participates in a covalent cross-link: Glycyl lysine isopeptide (Lys-Gly) (interchain with G-Cter in SUMO). The segment covering 123–148 (LHSNLNPQLLASPTSSESMDFNQGFY) has biased composition (polar residues). Over residues 149–169 (NNNNNNNNNNNNNNLNNFNNL) the composition is skewed to low complexity. In terms of domain architecture, Protein kinase spans 292–641 (LKIIRVLGRG…ASNLLNHEFV (350 aa)). Residues 298–306 (LGRGAGGVV) and Lys321 contribute to the ATP site. Asp414 functions as the Proton acceptor in the catalytic mechanism. 2 disordered regions span residues 491 to 510 (SNLPHQQQQPLQQQQQQQQQ) and 539 to 573 (NNSNNNIRNSNNNNNNNNNNNNNNNNNNNNNVLDI). Composition is skewed to low complexity over residues 496–510 (QQQQPLQQQQQQQQQ) and 539–569 (NNSNNNIRNSNNNNNNNNNNNNNNNNNNNNN).

Belongs to the protein kinase superfamily. STE Ser/Thr protein kinase family. MAP kinase kinase subfamily. Interacts with mip1. Mg(2+) is required as a cofactor. Sumoylated and ubiquitinated in response to chemoattractant stimulation. Sumoylation is linked to kinase activation and results in translocation.

Its subcellular location is the cytoplasm. It localises to the nucleus. It carries out the reaction L-seryl-[protein] + ATP = O-phospho-L-seryl-[protein] + ADP + H(+). It catalyses the reaction L-threonyl-[protein] + ATP = O-phospho-L-threonyl-[protein] + ADP + H(+). The enzyme catalyses L-tyrosyl-[protein] + ATP = O-phospho-L-tyrosyl-[protein] + ADP + H(+). In terms of biological role, required for cAMP-mediated activation of guanylyl cyclase activity and plays an essential role in aggregation, morphogenesis, and chemotaxis. Appears to act upstream of erk1 but not erk2. The chain is Dual specificity mitogen-activated protein kinase kinase 1 from Dictyostelium discoideum (Social amoeba).